We begin with the raw amino-acid sequence, 1301 residues long: DNA-directed RNA polymerase subunit beta (1301 aa).

This sequence belongs to the RNA polymerase beta chain family. In terms of assembly, the RNAP catalytic core consists of 2 alpha, 1 beta, 1 beta' and 1 omega subunit. When a sigma factor is associated with the core the holoenzyme is formed, which can initiate transcription.

It catalyses the reaction RNA(n) + a ribonucleoside 5'-triphosphate = RNA(n+1) + diphosphate. Its function is as follows. DNA-dependent RNA polymerase catalyzes the transcription of DNA into RNA using the four ribonucleoside triphosphates as substrates. This is DNA-directed RNA polymerase subunit beta from Chlorobium luteolum (strain DSM 273 / BCRC 81028 / 2530) (Pelodictyon luteolum).